The following is a 223-amino-acid chain: Endonuclease V (223 aa).

Mg(2+)-binding residues include Asp35 and Asp103.

This sequence belongs to the endonuclease V family. Requires Mg(2+) as cofactor.

It is found in the cytoplasm. It carries out the reaction Endonucleolytic cleavage at apurinic or apyrimidinic sites to products with a 5'-phosphate.. Functionally, DNA repair enzyme involved in the repair of deaminated bases. Selectively cleaves double-stranded DNA at the second phosphodiester bond 3' to a deoxyinosine leaving behind the intact lesion on the nicked DNA. The protein is Endonuclease V of Escherichia coli O139:H28 (strain E24377A / ETEC).